Consider the following 177-residue polypeptide: Adenine phosphoribosyltransferase (177 aa).

The protein belongs to the purine/pyrimidine phosphoribosyltransferase family. In terms of assembly, homodimer.

The protein resides in the cytoplasm. It catalyses the reaction AMP + diphosphate = 5-phospho-alpha-D-ribose 1-diphosphate + adenine. It participates in purine metabolism; AMP biosynthesis via salvage pathway; AMP from adenine: step 1/1. In terms of biological role, catalyzes a salvage reaction resulting in the formation of AMP, that is energically less costly than de novo synthesis. This Pelodictyon phaeoclathratiforme (strain DSM 5477 / BU-1) protein is Adenine phosphoribosyltransferase.